The sequence spans 571 residues: Adenine deaminase (571 aa).

The protein belongs to the metallo-dependent hydrolases superfamily. Adenine deaminase family. Mn(2+) serves as cofactor.

It catalyses the reaction adenine + H2O + H(+) = hypoxanthine + NH4(+). The sequence is that of Adenine deaminase from Dehalococcoides mccartyi (strain ATCC BAA-2266 / KCTC 15142 / 195) (Dehalococcoides ethenogenes (strain 195)).